An 894-amino-acid chain; its full sequence is Probable cytoplasmic aconitate hydratase (894 aa).

Residues Q87 and 207 to 209 contribute to the substrate site; that span reads DSH. 3 residues coordinate [4Fe-4S] cluster: C438, C504, and C507. Substrate-binding positions include R537, R542, and 781–782; that span reads SR.

It belongs to the aconitase/IPM isomerase family. It depends on [4Fe-4S] cluster as a cofactor.

The protein localises to the cytoplasm. Its subcellular location is the cytosol. It catalyses the reaction citrate = D-threo-isocitrate. Catalyzes the isomerization of citrate to isocitrate via cis-aconitate. The polypeptide is Probable cytoplasmic aconitate hydratase (aco1) (Dictyostelium discoideum (Social amoeba)).